A 169-amino-acid chain; its full sequence is Peptide deformylase 1 (169 aa).

Positions 93 and 135 each coordinate Fe cation. Glu-136 is an active-site residue. Fe cation is bound at residue His-139.

It belongs to the polypeptide deformylase family. Fe(2+) serves as cofactor.

It catalyses the reaction N-terminal N-formyl-L-methionyl-[peptide] + H2O = N-terminal L-methionyl-[peptide] + formate. Functionally, removes the formyl group from the N-terminal Met of newly synthesized proteins. Requires at least a dipeptide for an efficient rate of reaction. N-terminal L-methionine is a prerequisite for activity but the enzyme has broad specificity at other positions. This chain is Peptide deformylase 1, found in Corynebacterium efficiens (strain DSM 44549 / YS-314 / AJ 12310 / JCM 11189 / NBRC 100395).